We begin with the raw amino-acid sequence, 63 residues long: Large ribosomal subunit protein bL35 (63 aa).

It belongs to the bacterial ribosomal protein bL35 family.

The sequence is that of Large ribosomal subunit protein bL35 from Finegoldia magna (strain ATCC 29328 / DSM 20472 / WAL 2508) (Peptostreptococcus magnus).